The chain runs to 470 residues: 3-isopropylmalate dehydratase large subunit (470 aa).

Cys-348, Cys-409, and Cys-412 together coordinate [4Fe-4S] cluster.

Belongs to the aconitase/IPM isomerase family. LeuC type 1 subfamily. Heterodimer of LeuC and LeuD. The cofactor is [4Fe-4S] cluster.

It carries out the reaction (2R,3S)-3-isopropylmalate = (2S)-2-isopropylmalate. The protein operates within amino-acid biosynthesis; L-leucine biosynthesis; L-leucine from 3-methyl-2-oxobutanoate: step 2/4. Functionally, catalyzes the isomerization between 2-isopropylmalate and 3-isopropylmalate, via the formation of 2-isopropylmaleate. This is 3-isopropylmalate dehydratase large subunit from Acidithiobacillus ferrooxidans (strain ATCC 23270 / DSM 14882 / CIP 104768 / NCIMB 8455) (Ferrobacillus ferrooxidans (strain ATCC 23270)).